Here is a 218-residue protein sequence, read N- to C-terminus: Octanoyltransferase (218 aa).

The 177-residue stretch at 31–207 (AQTPDELWLL…QLAAQLGYAE (177 aa)) folds into the BPL/LPL catalytic domain. Substrate contacts are provided by residues 70–77 (RGGQVTYH), 137–139 (SLG), and 150–152 (GLA). C168 (acyl-thioester intermediate) is an active-site residue.

This sequence belongs to the LipB family.

It localises to the cytoplasm. The enzyme catalyses octanoyl-[ACP] + L-lysyl-[protein] = N(6)-octanoyl-L-lysyl-[protein] + holo-[ACP] + H(+). It participates in protein modification; protein lipoylation via endogenous pathway; protein N(6)-(lipoyl)lysine from octanoyl-[acyl-carrier-protein]: step 1/2. Functionally, catalyzes the transfer of endogenously produced octanoic acid from octanoyl-acyl-carrier-protein onto the lipoyl domains of lipoate-dependent enzymes. Lipoyl-ACP can also act as a substrate although octanoyl-ACP is likely to be the physiological substrate. In Azotobacter vinelandii (strain DJ / ATCC BAA-1303), this protein is Octanoyltransferase.